The following is a 456-amino-acid chain: uncharacterized protein (456 aa).

Belongs to the herpesviridae UL49 family.

This is an uncharacterized protein from Equus caballus (Horse).